The chain runs to 629 residues: Protein SPT2 homolog (629 aa).

An important for interaction with DNA region spans residues methionine 1–serine 522. Positions glutamine 45–lysine 72 form a coiled coil. The segment covering valine 53–phenylalanine 93 has biased composition (basic and acidic residues). Disordered regions lie at residues valine 53–serine 181, lysine 206–tyrosine 533, and glutamate 608–lysine 629. Residues lysine 111–lysine 123 show a composition bias toward polar residues. Residues glycine 127 to serine 144 show a composition bias toward acidic residues. Residues valine 203–lysine 228 are a coiled coil. Composition is skewed to basic and acidic residues over residues lysine 206–arginine 247 and lysine 257–glutamine 277. Composition is skewed to polar residues over residues serine 278–serine 297, serine 305–alanine 327, serine 335–aspartate 345, valine 353–glycine 364, serine 387–proline 398, asparagine 437–serine 450, and serine 462–isoleucine 490. The interval glycine 523–lysine 629 is important for interaction with histones. The stretch at tryptophan 591–lysine 629 forms a coiled coil.

This sequence belongs to the SPT2 family. In terms of assembly, interacts with histones. Interacts with a heterotetrameric complex formed by histone H3 and H4, especially when the histone tetramer is not bound to DNA.

Its subcellular location is the nucleus. The protein localises to the nucleolus. Its function is as follows. Histone chaperone that stabilizes pre-existing histone tetramers and regulates replication-independent histone exchange on chromatin. Required for normal chromatin refolding in the coding region of transcribed genes, and for the suppression of spurious transcription. Binds DNA and histones and promotes nucleosome assembly (in vitro). Facilitates formation of tetrameric histone complexes containing histone H3 and H4. Modulates RNA polymerase 1-mediated transcription. Binds DNA, with a preference for branched DNA species, such as Y-form DNA and Holliday junction DNA. This is Protein SPT2 homolog (spty2d1) from Danio rerio (Zebrafish).